A 135-amino-acid chain; its full sequence is MGLTYQLIPVLVCLLVCTSHFVHGHKCDITLAEIIKTLNILTTRKNSCMELPVADVFAAPKNTTEKETFCRVGIELRRIYRSHTCLNKFLGGLDRNLNSLASKTCSVNEAKTSTSTLKDLLERLKTIMKEKYSKC.

A signal peptide spans 1–24; sequence MGLTYQLIPVLVCLLVCTSHFVHG. 3 cysteine pairs are disulfide-bonded: C27–C135, C48–C85, and C70–C105. Residue N62 is glycosylated (N-linked (GlcNAc...) asparagine).

This sequence belongs to the IL-4/IL-13 family.

Its subcellular location is the secreted. Functionally, participates in at least several B-cell activation processes as well as of other cell types. It is a costimulator of DNA-synthesis. It induces the expression of class II MHC molecules on resting B-cells. It enhances both secretion and cell surface expression of IgE and IgG1. It also regulates the expression of the low affinity Fc receptor for IgE (CD23) on both lymphocytes and monocytes. Positively regulates IL31RA expression in macrophages. Stimulates autophagy in dendritic cells by interfering with mTORC1 signaling and through the induction of RUFY4. This Bubalus carabanensis (Swamp type water buffalo) protein is Interleukin-4 (IL4).